We begin with the raw amino-acid sequence, 253 residues long: 23S rRNA (cytidine-2'-O)-methyltransferase TlyA (253 aa).

One can recognise an S4 RNA-binding domain in the interval 1 to 73; that stretch reads MRFDFFVSKR…LKLDLLSEIY (73 aa).

The protein belongs to the TlyA family.

It carries out the reaction cytidine(1920) in 23S rRNA + S-adenosyl-L-methionine = 2'-O-methylcytidine(1920) in 23S rRNA + S-adenosyl-L-homocysteine + H(+). In terms of biological role, catalyzes the 2'-O-methylation at nucleotide C1920 in 23S rRNA. Enhances motility. Enhances biofilm formation. Involved in the assembly of 70S ribosomes. Involved in virulence by promoting adherence and invasion to host cells. Involved in pathogenicity by modulating secretion of host-protective chemokine interleukin 8 (IL-8). Involved in susceptibility to antibiotic capreomycin. The polypeptide is 23S rRNA (cytidine-2'-O)-methyltransferase TlyA (Campylobacter jejuni subsp. jejuni serotype O:23/36 (strain 81-176)).